We begin with the raw amino-acid sequence, 344 residues long: L-rhamnose-proton symporter (344 aa).

The next 10 helical transmembrane spans lie at 4–24 (AITM…CFYA), 38–58 (WSIG…ALLL), 68–88 (FNLS…IGNI), 101–121 (MGIG…TPII), 137–157 (TLLG…AGQL), 175–195 (LLLA…MNAA), 214–234 (LPSY…FCFV), 259–279 (ILLS…YAWG), 290–310 (ISWM…GLVL), and 323–343 (VLSL…MGMA).

It belongs to the L-rhamnose transporter (TC 2.A.7.6) family.

The protein localises to the cell inner membrane. The enzyme catalyses L-rhamnopyranose(in) + H(+)(in) = L-rhamnopyranose(out) + H(+)(out). Its function is as follows. Uptake of L-rhamnose across the cytoplasmic membrane with the concomitant transport of protons into the cell (symport system). The sequence is that of L-rhamnose-proton symporter from Citrobacter koseri (strain ATCC BAA-895 / CDC 4225-83 / SGSC4696).